We begin with the raw amino-acid sequence, 433 residues long: Casein kinase 1-like protein 5 (433 aa).

The region spanning 9–278 is the Protein kinase domain; sequence FRLGRKIGSG…LKRLFRNLFI (270 aa). ATP-binding positions include 15–23 and Lys-38; that span reads IGSGSFGEI. Asp-128 (proton acceptor) is an active-site residue. The interval 297 to 433 is disordered; sequence QSQSGNPQPR…DDVEPQSKAL (137 aa). Positions 342–359 are enriched in basic and acidic residues; sequence LKQKDKNGNDSAIAKDKL. The segment covering 362–375 has biased composition (low complexity); the sequence is GSLNLGRSEGSSSR. Ser-390 carries the post-translational modification Phosphoserine. Residues 407-423 are compositionally biased toward polar residues; the sequence is INNNAGDETAATPQSNG.

It belongs to the protein kinase superfamily. CK1 Ser/Thr protein kinase family. Casein kinase I subfamily. In terms of assembly, monomer. Autophosphorylated.

Its subcellular location is the cytoplasm. The catalysed reaction is L-seryl-[protein] + ATP = O-phospho-L-seryl-[protein] + ADP + H(+). It carries out the reaction L-threonyl-[protein] + ATP = O-phospho-L-threonyl-[protein] + ADP + H(+). Casein kinases are operationally defined by their preferential utilization of acidic proteins such as caseins as substrates. It can phosphorylate a large number of proteins. The sequence is that of Casein kinase 1-like protein 5 from Arabidopsis thaliana (Mouse-ear cress).